A 229-amino-acid polypeptide reads, in one-letter code: C-type lectin domain family 1 member B (229 aa).

Residues 1-33 (MQDEDGYITLNIKTRKPALISVGSASSSWWRVM) lie on the Cytoplasmic side of the membrane. Tyr7 is modified (phosphotyrosine). The short motif at 7–10 (YITL) is the ITAM element. The helical; Signal-anchor for type II membrane protein transmembrane segment at 34–54 (ALILLILCVGMVVGLVALGIW) threads the bilayer. At 55-229 (SVMQRNYLQG…AGMTKVDQLP (175 aa)) the chain is on the extracellular side. Residue Asn68 is glycosylated (N-linked (GlcNAc...) asparagine). The cysteines at positions 102 and 113 are disulfide-linked. A C-type lectin domain is found at 109–217 (YGDSCYGFFR…CENKHYLMCE (109 aa)). Residues Asn120 and Asn134 are each glycosylated (N-linked (GlcNAc...) asparagine). Intrachain disulfides connect Cys130–Cys216 and Cys195–Cys208.

As to quaternary structure, homodimer. Interacts (via cytoplasmic domain) with RACK1; promotes CLEC1B ubiquitination and proteasome-mediated degradation. Interacts (dimer) with SYK (via SH2 domains). Interacts with PDPN; the interaction is independent of CLEC1B glycosylation and activates CLEC1B. Glycosylated. In terms of processing, phosphorylated on tyrosine residue in response to rhodocytin binding. Expressed preferentially in the liver. Also expressed in immune cells of myeloid origin and on the surface of platelets.

The protein resides in the membrane. C-type lectin-like receptor that functions as a platelet receptor for the lymphatic endothelial marker, PDPN. After ligand activation, signals via sequential activation of SRC and SYK tyrosine kinases leading to activation of PLCG2. In terms of biological role, (Microbial infection) Acts as a receptor for the platelet-aggregating snake venom protein rhodocytin. Rhodocytin binding leads to tyrosine phosphorylation and this promotes the binding of spleen tyrosine kinase (SYK) and initiation of downstream tyrosine phosphorylation events and activation of PLCG2. Functionally, (Microbial infection) Acts as an attachment factor for Human immunodeficiency virus type 1 (HIV-1) and facilitates its capture by platelets. The sequence is that of C-type lectin domain family 1 member B (CLEC1B) from Homo sapiens (Human).